Here is a 470-residue protein sequence, read N- to C-terminus: Fumarate reductase 1 (470 aa).

FAD is bound at residue 6 to 20 (VVVIGTGLAGLAAAN). Phosphoserine is present on S66. Active-site residues include H249 and R272.

It belongs to the FAD-dependent oxidoreductase 2 family. FRD/SDH subfamily. The cofactor is FAD. Post-translationally, the N-terminus is blocked.

Its subcellular location is the cytoplasm. The catalysed reaction is succinate + NAD(+) = fumarate + NADH + H(+). Functionally, irreversibly catalyzes the reduction of fumarate to succinate. Together with the second isozyme of soluble fumarate reductase (OSM1), essential for anaerobic growth. Involved in maintaining redox balance. Reduction of fumarate is the main source of succinate during fermentation, and under anaerobic conditions, the formation of succinate is strictly required for the reoxidation of FADH(2). In Saccharomyces cerevisiae (strain ATCC 204508 / S288c) (Baker's yeast), this protein is Fumarate reductase 1 (FRD1).